We begin with the raw amino-acid sequence, 312 residues long: Methionyl-tRNA formyltransferase (312 aa).

109-112 (SLLP) is a binding site for (6S)-5,6,7,8-tetrahydrofolate.

It belongs to the Fmt family.

It carries out the reaction L-methionyl-tRNA(fMet) + (6R)-10-formyltetrahydrofolate = N-formyl-L-methionyl-tRNA(fMet) + (6S)-5,6,7,8-tetrahydrofolate + H(+). Its function is as follows. Attaches a formyl group to the free amino group of methionyl-tRNA(fMet). The formyl group appears to play a dual role in the initiator identity of N-formylmethionyl-tRNA by promoting its recognition by IF2 and preventing the misappropriation of this tRNA by the elongation apparatus. The sequence is that of Methionyl-tRNA formyltransferase from Listeria innocua serovar 6a (strain ATCC BAA-680 / CLIP 11262).